The following is a 435-amino-acid chain: GTPase Der (435 aa).

EngA-type G domains follow at residues 3–168 (PTVA…PEDD) and 176–351 (VKLT…QNRR). GTP contacts are provided by residues 9-16 (GRPNVGKS), 56-60 (DTGGY), 120-123 (NKVD), 182-189 (GRPNVGKS), 229-233 (DTAGL), and 294-297 (NKWD). The KH-like domain maps to 352–435 (MKIDTSRLNN…TPIELKFRRK (84 aa)).

This sequence belongs to the TRAFAC class TrmE-Era-EngA-EngB-Septin-like GTPase superfamily. EngA (Der) GTPase family. As to quaternary structure, associates with the 50S ribosomal subunit.

GTPase that plays an essential role in the late steps of ribosome biogenesis. The protein is GTPase Der of Chloroherpeton thalassium (strain ATCC 35110 / GB-78).